Reading from the N-terminus, the 493-residue chain is Ribonuclease Y (493 aa).

Residues 19–39 (IFAILFLIIVILNLGLLVFLA) traverse the membrane as a helical segment. Positions 172–241 (SASFTVIESD…LTIRNILIND (70 aa)) constitute a KH domain. Positions 300 to 392 (VLSHCLETGF…TQIGDKLSAG (93 aa)) constitute an HD domain.

The protein belongs to the RNase Y family.

Its subcellular location is the cell membrane. Its function is as follows. Endoribonuclease that initiates mRNA decay. This Mycoplasma pneumoniae (strain ATCC 29342 / M129 / Subtype 1) (Mycoplasmoides pneumoniae) protein is Ribonuclease Y.